Consider the following 346-residue polypeptide: 4-hydroxy-2-oxovalerate aldolase (346 aa).

Positions 8-260 (VTVHDMTLRD…ETGVDVFKIQ (253 aa)) constitute a Pyruvate carboxyltransferase domain. Position 16–17 (16–17 (RD)) interacts with substrate. Asp-17 lines the Mn(2+) pocket. Residue His-20 is the Proton acceptor of the active site. Ser-170 and His-199 together coordinate substrate. Mn(2+) contacts are provided by His-199 and His-201. Tyr-290 is a binding site for substrate.

The protein belongs to the 4-hydroxy-2-oxovalerate aldolase family.

It carries out the reaction (S)-4-hydroxy-2-oxopentanoate = acetaldehyde + pyruvate. This is 4-hydroxy-2-oxovalerate aldolase from Polaromonas naphthalenivorans (strain CJ2).